A 273-amino-acid chain; its full sequence is GTP cyclohydrolase MptA (273 aa).

Belongs to the GTP cyclohydrolase IV family. Homodimer. Fe(2+) serves as cofactor.

The catalysed reaction is GTP + H2O = 7,8-dihydroneopterin 2',3'-cyclic phosphate + formate + diphosphate + H(+). It participates in cofactor biosynthesis; 5,6,7,8-tetrahydromethanopterin biosynthesis. In terms of biological role, converts GTP to 7,8-dihydro-D-neopterin 2',3'-cyclic phosphate, the first intermediate in the biosynthesis of coenzyme methanopterin. This is GTP cyclohydrolase MptA from Picrophilus torridus (strain ATCC 700027 / DSM 9790 / JCM 10055 / NBRC 100828 / KAW 2/3).